The following is a 165-amino-acid chain: Coronafacic acid dehydratase (165 aa).

Residue H62 is part of the active site.

Belongs to the thioester dehydratase family.

Its pathway is phytotoxin biosynthesis; coronatine biosynthesis. The sequence is that of Coronafacic acid dehydratase (cfa2) from Pseudomonas savastanoi pv. glycinea (Pseudomonas syringae pv. glycinea).